Consider the following 83-residue polypeptide: Arminin 3b (83 aa).

Residues 1–18 (MKIVFAILFLTFIALTYA) form the signal peptide. A propeptide spanning residues 19–57 (RSFEDLKEEIKNEIEKEIFDDLEEESDELDNNVKKFNDA) is cleaved from the precursor. A Serine amide modification is found at Ser-80.

Belongs to the arminin family. As to expression, expressed in entodermal epithelium along the body column.

The protein localises to the secreted. Its subcellular location is the target cell membrane. Antimicrobial peptide with a broad-spectrum antimicrobial activity. Keeps its antibacterial activity under a wide range of salt concentrations that mimic physiological conditions of human blood, which is surprising, since Hydra is an obligate freshwater animal with nearly no salt tolerance. Does not affect red blood cells. The chain is Arminin 3b from Hydra vulgaris (Hydra).